The chain runs to 887 residues: Semaphorin-6B (887 aa).

A signal peptide spans 1–26 (MWTPRAPPPRPALLFLLLLLLRVTHG). Over 27–605 (LFPDEPPPLS…VSVNLLVTSS (579 aa)) the chain is Extracellular. Residues 32–525 (PPPLSVAPRD…FPRCVVRVPV (494 aa)) form the Sema domain. A glycan (N-linked (GlcNAc...) asparagine) is linked at asparagine 75. Intrachain disulfides connect cysteine 117–cysteine 127 and cysteine 145–cysteine 154. N-linked (GlcNAc...) asparagine glycosylation is found at asparagine 156, asparagine 168, and asparagine 292. Intrachain disulfides connect cysteine 268/cysteine 379 and cysteine 293/cysteine 338. N-linked (GlcNAc...) asparagine glycans are attached at residues asparagine 387, asparagine 442, and asparagine 463. 4 disulfides stabilise this stretch: cysteine 487–cysteine 519, cysteine 528–cysteine 546, cysteine 534–cysteine 580, and cysteine 538–cysteine 554. Residues 606-626 (VAAFVVGAVVSGFSVGWFVGL) traverse the membrane as a helical segment. Over 627 to 887 (RERRELARRK…TGERTAPPVP (261 aa)) the chain is Cytoplasmic. Disordered stretches follow at residues 656–675 (LGER…GGPG), 697–717 (HGGP…TPLP), and 759–887 (APEQ…PPVP). Residues 662 to 674 (TGTGGRGGAGGGP) show a composition bias toward gly residues. Arginine 667 bears the Omega-N-methylarginine mark. The segment covering 707–717 (LLPTPEQTPLP) has biased composition (low complexity).

Belongs to the semaphorin family.

The protein localises to the cell membrane. Its function is as follows. Functions as a cell surface repellent for mossy fibers of developing neurons in the hippocampus where it plays a role in axon guidance. May function through the PLXNA4 receptor expressed by mossy cell axons. The protein is Semaphorin-6B (Sema6b) of Rattus norvegicus (Rat).